The following is a 471-amino-acid chain: L-lysine 2,3-aminomutase (471 aa).

Positions 120–332 constitute a Radical SAM core domain; it reads HRYPDRVLFL…GLRGHTSGYA (213 aa). [4Fe-4S] cluster contacts are provided by Cys134, Cys138, and Cys141. Lys346 carries the post-translational modification N6-(pyridoxal phosphate)lysine.

Belongs to the radical SAM superfamily. KamA family. As to quaternary structure, homotetramer. [4Fe-4S] cluster is required as a cofactor. Requires pyridoxal 5'-phosphate as cofactor.

It catalyses the reaction L-lysine = (3S)-3,6-diaminohexanoate. It functions in the pathway amino-acid degradation; L-lysine degradation via acetate pathway. Its function is as follows. Catalyzes the interconversion of L-alpha-lysine and L-beta-lysine. This chain is L-lysine 2,3-aminomutase (kamA), found in Bacillus subtilis (strain 168).